A 588-amino-acid chain; its full sequence is Transcription factor tau 60 kDa subunit (588 aa).

Residues 399 to 588 (LPKLPENFSM…VYCGTTLEVM (190 aa)) form a sufficient for SPT15-binding region.

Heterodimer with TFC6. Component of the TFIIIC complex composed of TFC1, TFC3, TFC4, TFC6, TFC7 and TFC8. The subunits are organized in two globular domains, tauA and tauB, connected by a proteolysis-sensitive and flexible linker. Interacts with SPT15 and directly with TFC6.

It localises to the nucleus. Its function is as follows. TFIIIC mediates tRNA and 5S RNA gene activation by binding to intragenic promoter elements. Upstream of the transcription start site, TFIIIC assembles the initiation complex TFIIIB-TFIIIC-tDNA, which is sufficient for RNA polymerase III recruitment and function. Part of the tauB domain of TFIIIC that binds boxB DNA promoter sites of tRNA and similar genes. Plays a role in TFIIB assembly through its interaction with SPT15/TBP. Essential for cell viability. The protein is Transcription factor tau 60 kDa subunit (TFC8) of Saccharomyces cerevisiae (strain ATCC 204508 / S288c) (Baker's yeast).